Here is a 20-residue protein sequence, read N- to C-terminus: 2-oxo-acid reductase (20 aa).

It belongs to the AOR/FOR family. As to quaternary structure, forms various types of homooligomers. The cofactor is [4Fe-4S] cluster. Mo-molybdopterin serves as cofactor.

Its subcellular location is the cell membrane. The enzyme catalyses a (2R)-2-hydroxycarboxylate + A = a 2-oxocarboxylate + AH2. With respect to regulation, is inhibited by cyanide. Is sensitive to oxygen. Oxidoreductase with an extremely broad substrate specificity that can reduce reversibly 2-oxocarboxylates to (2R)-hydroxycarboxylates. This Proteus hauseri protein is 2-oxo-acid reductase.